Reading from the N-terminus, the 142-residue chain is Neuritin (142 aa).

The first 27 residues, 1–27 (MGLTLSGRYISLFLAVQIAYLLQAVRA), serve as a signal peptide directing secretion. Ala-112 carries the GPI-anchor amidated alanine lipid modification. The propeptide at 113–142 (GGNGAIRSSVPFGVTLLITALSALVTWMQF) is removed in mature form.

This sequence belongs to the neuritin family.

It is found in the cell membrane. The protein resides in the synapse. Its function is as follows. Modulates postsynaptic dendritic arbor elaboration and synaptic maturation. The polypeptide is Neuritin (nrn1) (Danio rerio (Zebrafish)).